Consider the following 257-residue polypeptide: MTESSLDLQESGWEELRREARKIEGDLDVKLSSYAKLGARFTQGDTDLVMNYEKVLKCVLVSGYVDTGSPTVGSGRSWKSMEMEIQSLLEKLLDINDSMSRCAASAAPTTSVTQKLARHRDILHEYTQEFRRIKGNINSLREHAELLSSVRDDISEYKASGSMSPGVQVLRERASIHGSISHIDDVIGQAQATRAVLGSQRSLFSDVQGKVKNLGDKFPVIRGLLGSIKRKRSRDTLILSAVIAACTLFLIIYWLSK.

Residues 1–235 lie on the Cytoplasmic side of the membrane; the sequence is MTESSLDLQE…GSIKRKRSRD (235 aa). Asparagine 51 carries the post-translational modification Phosphoserine. A coiled-coil region spans residues 113–147; sequence TQKLARHRDILHEYTQEFRRIKGNINSLREHAELL. Residues 236-256 traverse the membrane as a helical; Anchor for type IV membrane protein segment; the sequence is TLILSAVIAACTLFLIIYWLS. Lysine 257 is a topological domain (vesicular).

Belongs to the GOSR1 family. In terms of assembly, component of several multiprotein Golgi SNARE complexes.

The protein resides in the golgi apparatus membrane. The protein localises to the endoplasmic reticulum membrane. Its function is as follows. Involved in transport from the ER to the Golgi apparatus as well as in intra-Golgi transport. It belongs to a super-family of proteins called t-SNAREs or soluble NSF (N-ethylmaleimide-sensitive factor) attachment protein receptor. The sequence is that of Golgi SNAP receptor complex member 1-2 (GOS12) from Arabidopsis thaliana (Mouse-ear cress).